Reading from the N-terminus, the 352-residue chain is Glycerol-3-phosphate dehydrogenase [NAD(P)+] (352 aa).

Positions 11, 12, 32, and 105 each coordinate NADPH. Sn-glycerol 3-phosphate is bound by residues Lys-105, Gly-133, and Ser-135. Ala-137 contacts NADPH. Lys-188, Asp-241, Ser-251, Arg-252, and Asn-253 together coordinate sn-glycerol 3-phosphate. Lys-188 functions as the Proton acceptor in the catalytic mechanism. Arg-252 is an NADPH binding site. Residues Val-276 and Glu-278 each coordinate NADPH.

Belongs to the NAD-dependent glycerol-3-phosphate dehydrogenase family.

Its subcellular location is the cytoplasm. The enzyme catalyses sn-glycerol 3-phosphate + NAD(+) = dihydroxyacetone phosphate + NADH + H(+). It carries out the reaction sn-glycerol 3-phosphate + NADP(+) = dihydroxyacetone phosphate + NADPH + H(+). The protein operates within membrane lipid metabolism; glycerophospholipid metabolism. Its function is as follows. Catalyzes the reduction of the glycolytic intermediate dihydroxyacetone phosphate (DHAP) to sn-glycerol 3-phosphate (G3P), the key precursor for phospholipid synthesis. This is Glycerol-3-phosphate dehydrogenase [NAD(P)+] from Desulfitobacterium hafniense (strain Y51).